The following is a 131-amino-acid chain: 14.7 kDa heat shock protein (131 aa).

The segment covering 1–11 has biased composition (polar residues); the sequence is MSRNMEVNAGS. The interval 1-20 is disordered; that stretch reads MSRNMEVNAGSSGEIPSPIR. The sHSP domain occupies 22 to 131; the sequence is RFQKSGSQAV…INVKERILHY (110 aa).

It belongs to the small heat shock protein (HSP20) family. As to quaternary structure, may form oligomeric structures.

Its subcellular location is the cytoplasm. This Arabidopsis thaliana (Mouse-ear cress) protein is 14.7 kDa heat shock protein (HSP14.7).